A 432-amino-acid polypeptide reads, in one-letter code: Histidine--tRNA ligase (432 aa).

The tract at residues 412-432 is disordered; that stretch reads TQVPLAAFPPEEGRPTYDDYA. Residues 422–432 are compositionally biased toward basic and acidic residues; the sequence is EEGRPTYDDYA.

It belongs to the class-II aminoacyl-tRNA synthetase family.

Its subcellular location is the cytoplasm. The catalysed reaction is tRNA(His) + L-histidine + ATP = L-histidyl-tRNA(His) + AMP + diphosphate + H(+). The sequence is that of Histidine--tRNA ligase from Natronomonas pharaonis (strain ATCC 35678 / DSM 2160 / CIP 103997 / JCM 8858 / NBRC 14720 / NCIMB 2260 / Gabara) (Halobacterium pharaonis).